A 192-amino-acid chain; its full sequence is Fe/S biogenesis protein NfuA (192 aa).

Positions 149 and 152 each coordinate [4Fe-4S] cluster.

Belongs to the NfuA family. In terms of assembly, homodimer. Requires [4Fe-4S] cluster as cofactor.

Its function is as follows. Involved in iron-sulfur cluster biogenesis. Binds a 4Fe-4S cluster, can transfer this cluster to apoproteins, and thereby intervenes in the maturation of Fe/S proteins. Could also act as a scaffold/chaperone for damaged Fe/S proteins. In Idiomarina loihiensis (strain ATCC BAA-735 / DSM 15497 / L2-TR), this protein is Fe/S biogenesis protein NfuA.